The chain runs to 96 residues: UPF0184 protein CG14818 (96 aa).

2 disordered regions span residues 1–28 (MSPK…LQEM) and 70–96 (IAEE…AAPK). A compositionally biased stretch (polar residues) spans 8–21 (DPSSSGDSGNTNVQ). The stretch at 21–77 (QEADLQEMEDVNNSLDALSCALDAVEQRTDDIMSQLRELLNSNREIRRLIAEENDNA) forms a coiled coil. Residues 72 to 85 (EENDNAPESGDDNM) show a composition bias toward acidic residues.

The protein belongs to the UPF0184 (EST00098) family.

In Drosophila melanogaster (Fruit fly), this protein is UPF0184 protein CG14818.